A 1086-amino-acid chain; its full sequence is NAD(P) transhydrogenase, mitochondrial (1086 aa).

Residues 1-43 (MANLLKTVVTGCSCPLLSNLGSCKGLRVKKDFLRTFYTHQELW) constitute a mitochondrion transit peptide. Residues 44 to 474 (CKAPVKPGIP…TITPFRKTMS (431 aa)) lie on the Mitochondrial matrix side of the membrane. Lysine 70 carries the N6-acetyllysine modification. Lysine 117 carries the post-translational modification N6-succinyllysine. 182–184 (RVT) is an NAD(+) binding site. Lysine 224 carries the N6-succinyllysine modification. NAD(+)-binding positions include valine 237, 257–259 (DTR), and glycine 287. An N6-succinyllysine modification is found at lysine 294. NAD(+)-binding residues include glutamate 300 and leucine 319. Lysine 331 is subject to N6-succinyllysine. Residue lysine 397 is modified to N6-acetyllysine. 4 helical membrane-spanning segments follow: residues 475–493 (TASAYTAGLTGILGLGIAA), 501–521 (MVTTFGLAGIVGYHTVWGVTP), 527–546 (LMSVTNAISGLTAVGGLALM), and 558–578 (GLAALAAFISSVNIAGGFLVT). Topologically, residues 579 to 595 (QRMLDMFKRPTDPPEYN) are mitochondrial matrix. 5 helical membrane passes run 596-616 (YLYLLPAGTFVGGYLAALYSG), 622-642 (IMYLGSGLCCVGALAGLSTQG), 646-666 (LGNALGMIGVAGGLAATLGVL), 672-691 (LLAQMSGAMALGGTIGLTIA), and 702-722 (LVAAFHSLVGLAAVLTCIAEY). The Cytoplasmic portion of the chain corresponds to 723–739 (IIEYPHFATDAAANLTK). A run of 5 helical transmembrane segments spans residues 740-760 (IVAYLGTYIGGVTFSGSLIAY), 778-797 (HLLNAGLLAASVGGIIPFMV), 801-819 (FTTGITCLGSVSALSAVMG), 833-853 (VVITVLNSYSGWALCAEGFLL), and 857-879 (LLTIVGALIGSSGAILSYIMCVA). Topologically, residues 880 to 1086 (MNRSLANVIL…QAKVRESYQK (207 aa)) are mitochondrial matrix. NADP(+) is bound by residues tyrosine 933, 965 to 970 (VAGRMP), 1007 to 1011 (GANDT), 1026 to 1027 (GM), 1042 to 1049 (KRSLGVGY), and 1068 to 1069 (DA). Lysine 1079 is modified (N6-succinyllysine).

It in the N-terminal section; belongs to the AlaDH/PNT family. This sequence in the C-terminal section; belongs to the PNT beta subunit family. In terms of assembly, homodimer. Widely expressed with expression most readily detectable in adrenal, heart, kidney, thyroid and adipose tissues.

The protein localises to the mitochondrion inner membrane. It carries out the reaction NAD(+) + NADPH + H(+)(in) = NADH + NADP(+) + H(+)(out). In terms of biological role, the transhydrogenation between NADH and NADP is coupled to respiration and ATP hydrolysis and functions as a proton pump across the membrane. May play a role in reactive oxygen species (ROS) detoxification in the adrenal gland. This is NAD(P) transhydrogenase, mitochondrial (NNT) from Homo sapiens (Human).